The primary structure comprises 318 residues: MKKKIAEYEVGEQVDLFLLIKTATKGIASNGKPFLTVILQDQSGDIEAKLWDVSPEVERQYTAETIVKVAGDIQNYKGRIQLRVKQIRVANPNEVTDISDFVEKAPVKKEDMVEKITQYIFEMRNPNIQRLTRHLLNKHQNDFLDYPAATKNHHEFVSGLAYHVVSMLDLAKAISTLYPSLDKDLLYAGVILHDLGKVIELSGPISTTYTLEGNLLGHISIMVNEIGKAAEELKIEGEEVLILQHIVLSHHGKAEWGSPKPPLVKEAEILHYIDNLDAKMNMMDRALGRTKPGEYTERVFALDNRSFYKPKFQTYYDK.

The 117-residue stretch at 163–279 (HVVSMLDLAK…LHYIDNLDAK (117 aa)) folds into the HD domain.

It belongs to the YhaM family.

Shows a 3'-5' exoribonuclease activity. This chain is 3'-5' exoribonuclease YhaM, found in Bacillus cytotoxicus (strain DSM 22905 / CIP 110041 / 391-98 / NVH 391-98).